A 561-amino-acid chain; its full sequence is GPI mannosyltransferase 3 (561 aa).

8 helical membrane passes run 3–25, 64–84, 110–130, 155–175, 195–215, 246–266, 275–295, and 328–348; these read LIYV…QTYY, IAGL…LLVV, WALF…RTLA, LWPA…WLPL, FVLI…YWHG, FSVG…FGVM, YPVS…LSAV, and TMLW…AWYL. N-linked (GlcNAc...) asparagine glycans are attached at residues N398 and N456. The tract at residues 525-546 is disordered; it reads ENAFNRGPDSGQHEPDVHDHPP. Residues 535 to 546 are compositionally biased toward basic and acidic residues; that stretch reads GQHEPDVHDHPP.

Belongs to the glycosyltransferase 22 family. PIGB subfamily.

It localises to the endoplasmic reticulum membrane. Its pathway is glycolipid biosynthesis; glycosylphosphatidylinositol-anchor biosynthesis. Mannosyltransferase involved in glycosylphosphatidylinositol-anchor biosynthesis. Transfers the third alpha-1,2-mannose to Man2-GlcN-acyl-PI during GPI precursor assembly. The chain is GPI mannosyltransferase 3 from Drosophila melanogaster (Fruit fly).